The sequence spans 123 residues: Small ribosomal subunit protein uS12cz/uS12cy (123 aa).

Belongs to the universal ribosomal protein uS12 family. Part of the 30S ribosomal subunit.

The protein resides in the plastid. The protein localises to the chloroplast. Functionally, with S4 and S5 plays an important role in translational accuracy. Located at the interface of the 30S and 50S subunits. In Cucumis sativus (Cucumber), this protein is Small ribosomal subunit protein uS12cz/uS12cy (rps12-A).